The primary structure comprises 227 residues: 2,3-bisphosphoglycerate-dependent phosphoglycerate mutase (227 aa).

Substrate contacts are provided by residues 7–14, 20–21, R59, 86–89, K97, 113–114, and 182–183; these read RHGLSEWN, TG, ERHY, RR, and GN. H8 functions as the Tele-phosphohistidine intermediate in the catalytic mechanism. Catalysis depends on E86, which acts as the Proton donor/acceptor.

The protein belongs to the phosphoglycerate mutase family. BPG-dependent PGAM subfamily. Homodimer.

The catalysed reaction is (2R)-2-phosphoglycerate = (2R)-3-phosphoglycerate. The protein operates within carbohydrate degradation; glycolysis; pyruvate from D-glyceraldehyde 3-phosphate: step 3/5. Functionally, catalyzes the interconversion of 2-phosphoglycerate and 3-phosphoglycerate. The protein is 2,3-bisphosphoglycerate-dependent phosphoglycerate mutase of Mannheimia succiniciproducens (strain KCTC 0769BP / MBEL55E).